Here is a 137-residue protein sequence, read N- to C-terminus: MSGGRRKEEPPQPQLANGALKVSVWSKVLRSDAAWEDKDEFLDVIYWFRQIIAVVLGVIWGVLPLRGFLGIAGFCLINAGVLYLYFSNYLQIDEEEYGGTWELTKEGFMTSFALFMVCVADSFTTGHLDHLLHCHPL.

The Cytoplasmic portion of the chain corresponds to 1–44 (MSGGRRKEEPPQPQLANGALKVSVWSKVLRSDAAWEDKDEFLDV). A helical membrane pass occupies residues 45–65 (IYWFRQIIAVVLGVIWGVLPL). Position 66 (Arg66) is a topological domain, lumenal. The chain crosses the membrane as a helical span at residues 67–84 (GFLGIAGFCLINAGVLYL). The Cytoplasmic segment spans residues 85 to 103 (YFSNYLQIDEEEYGGTWEL). A helical transmembrane segment spans residues 104-127 (TKEGFMTSFALFMVCVADSFTTGH). The Lumenal segment spans residues 128–137 (LDHLLHCHPL).

It belongs to the EMC6 family. As to quaternary structure, component of the GET- and EMC-like (GEL) complex, composed of RAB5IF/OPTI and TMCO1. The GEL complex is part of the multi-pass translocon (MPT) complex, composed of three subcomplexes, the GEL complex (composed of RAB5IF/OPTI and TMCO1), the BOS complex (composed of NCLN/Nicalin, NOMO and TMEM147) and the PAT complex (composed of WDR83OS/Asterix and CCDC47). The MPT complex associates with the SEC61 complex. Interacts with NDUFS3, NDUFA4, NDUFV1, NDUFA9 and NDUFS8 of the mitochondrial membrane respiratory chain NADH dehydrogenase (Complex I). Interacts with UQCRC2 of the ubiquinol-cytochrome c reductase complex (Complex III). Interacts with COX5A and COX7C of the cytochrome c oxidase complex (Complex IV). As to expression, expressed in embryonic stem cells and differentiated neuronal cells.

It is found in the endoplasmic reticulum membrane. The protein localises to the mitochondrion inner membrane. In terms of biological role, component of the multi-pass translocon (MPT) complex that mediates insertion of multi-pass membrane proteins into the lipid bilayer of membranes. The MPT complex takes over after the SEC61 complex: following membrane insertion of the first few transmembrane segments of proteins by the SEC61 complex, the MPT complex occludes the lateral gate of the SEC61 complex to promote insertion of subsequent transmembrane regions. Within the MPT complex, the GEL subcomplex may mediate insertion of transmembrane regions into the membrane. In addition to its role in multi-pass membrane insertion, RAB5IF/OPTI also acts as an assembly factor for mitochondrial respiratory complexes. This is GEL complex subunit OPTI from Homo sapiens (Human).